A 111-amino-acid polypeptide reads, in one-letter code: uncharacterized protein (111 aa).

Transmembrane regions (helical) follow at residues 4 to 22 (FWIL…QFFI), 49 to 71 (LLIL…LFFI), and 91 to 108 (YMYH…LIYV).

Its subcellular location is the cell membrane. This is an uncharacterized protein from Bacillus subtilis (strain 168).